We begin with the raw amino-acid sequence, 430 residues long: 3-phosphoshikimate 1-carboxyvinyltransferase (430 aa).

Residues lysine 23, serine 24, and arginine 28 each coordinate 3-phosphoshikimate. Lysine 23 provides a ligand contact to phosphoenolpyruvate. Positions 93 and 121 each coordinate phosphoenolpyruvate. Serine 166, glutamine 168, aspartate 313, and lysine 340 together coordinate 3-phosphoshikimate. Glutamine 168 is a binding site for phosphoenolpyruvate. Aspartate 313 functions as the Proton acceptor in the catalytic mechanism. Phosphoenolpyruvate-binding residues include arginine 344 and arginine 386.

Belongs to the EPSP synthase family. Monomer.

Its subcellular location is the cytoplasm. It carries out the reaction 3-phosphoshikimate + phosphoenolpyruvate = 5-O-(1-carboxyvinyl)-3-phosphoshikimate + phosphate. It participates in metabolic intermediate biosynthesis; chorismate biosynthesis; chorismate from D-erythrose 4-phosphate and phosphoenolpyruvate: step 6/7. Functionally, catalyzes the transfer of the enolpyruvyl moiety of phosphoenolpyruvate (PEP) to the 5-hydroxyl of shikimate-3-phosphate (S3P) to produce enolpyruvyl shikimate-3-phosphate and inorganic phosphate. In Anaeromyxobacter sp. (strain Fw109-5), this protein is 3-phosphoshikimate 1-carboxyvinyltransferase.